We begin with the raw amino-acid sequence, 380 residues long: Transcription factor RF2a (380 aa).

The segment at 1–57 (MNREKSPIPGDGGDGLPPQATRRAGPPAAAAAAEYDISRMPDFPTRNPGHRRAHSEI) is disordered. The segment covering 16 to 33 (LPPQATRRAGPPAAAAAA) has biased composition (low complexity). Positions 56–108 (EILSLPEDLDLCAAGGGDGPSLSDENDEELFSMFLDVEKLNSTCGASSEAEAE) are activation of RTBV promoter. The bZIP domain occupies 181–244 (DPKRAKRIWA…SGLTTENSEL (64 aa)). The segment at 183–204 (KRAKRIWANRQSAARSKERKMR) is basic motif. The leucine-zipper stretch occupies residues 209–244 (LERKVQTLQTEATTLSAQLALLQRDTSGLTTENSEL). Positions 283–357 (GGMMMNFGGM…AQQLQQAARD (75 aa)) are interaction with TBP2. The segment covering 326–355 (QAQQQQVLHPQHQQQQPLHPLQAQQLQQAA) has biased composition (low complexity). Residues 326–380 (QAQQQQVLHPQHQQQQPLHPLQAQQLQQAARDLKMKSPMGGQSQWGDGKSGSSGN) are disordered.

Belongs to the bZIP family. Binds DNA as a homodimer or as a heterodimer with RF2b. The heterodimer binds stronger to DNA than the homodimer. Interacts with TBP2. As to expression, expressed at high levels in levels in leaf sheath, moderate levels in leaf blade, but not in roots. Predominantly expressed in vascular tissues.

Its subcellular location is the nucleus. Transcription factor probably involved in vascular development and shoot tissue organization. Binds to the DNA sequence 5'-CCGAGTGTGCCCCTGG-3' present in the promoter region Box II of the phloem-specific rice tungro bacilliform virus (RTBV) promoter. May regulate tissue-specific expression of the RTBV promoter and virus replication. The chain is Transcription factor RF2a (RF2a) from Oryza sativa subsp. japonica (Rice).